A 288-amino-acid chain; its full sequence is Bifunctional protein FolD (288 aa).

Residues 166-168 (GRS), Ser191, and Ile232 each bind NADP(+).

It belongs to the tetrahydrofolate dehydrogenase/cyclohydrolase family. Homodimer.

The enzyme catalyses (6R)-5,10-methylene-5,6,7,8-tetrahydrofolate + NADP(+) = (6R)-5,10-methenyltetrahydrofolate + NADPH. It catalyses the reaction (6R)-5,10-methenyltetrahydrofolate + H2O = (6R)-10-formyltetrahydrofolate + H(+). Its pathway is one-carbon metabolism; tetrahydrofolate interconversion. Functionally, catalyzes the oxidation of 5,10-methylenetetrahydrofolate to 5,10-methenyltetrahydrofolate and then the hydrolysis of 5,10-methenyltetrahydrofolate to 10-formyltetrahydrofolate. This Rickettsia rickettsii (strain Iowa) protein is Bifunctional protein FolD.